Reading from the N-terminus, the 624-residue chain is Ceramide transfer protein (624 aa).

Residues 1 to 11 show a composition bias toward polar residues; it reads MSDNQSWNSSG. Positions 1-24 are disordered; it reads MSDNQSWNSSGSEEDPETESGPPV. In terms of domain architecture, PH spans 23 to 117; the sequence is PVERCGVLSK…WIDAIEQHKT (95 aa). A Phosphoserine modification is found at serine 126. Position 132 is a phosphoserine; by PKD (serine 132). Serine 135 is subject to Phosphoserine. The stretch at 263 to 303 forms a coiled coil; it reads IELMVKREDSWQKRLDKETEKKRRTEEAYKNAMTELKKKSH. Serine 315 carries the phosphoserine modification. The FFAT motif lies at 321–327; that stretch reads EFFDAVE. A Phosphotyrosine modification is found at tyrosine 372. Residues serine 373, serine 377, and serine 380 each carry the phosphoserine modification. In terms of domain architecture, START spans 389–618; the sequence is DVHRFSSQVE…FTSYVQEKTA (230 aa). Residues glutamate 472, glutamine 493, asparagine 530, and tyrosine 579 each contribute to the an N-acylsphing-4-enine site.

As to quaternary structure, interacts with VAPA and VAPB. Interaction with VAPB is less efficient than with VAPA. Interacts (via FFAT motif) with the MOSPD2 (via MSP domain). Post-translationally, phosphorylation on Ser-132 decreases the affinity toward phosphatidylinositol 4-phosphate at Golgi membranes and reduces ceramide transfer activity. Inactivated by hyperphosphorylation of serine residues by CSNK1G2/CK1 that triggers dissociation from the Golgi complex, thus down-regulating ER-to-Golgi transport of ceramide and sphingomyelin synthesis.

Its subcellular location is the cytoplasm. The protein localises to the golgi apparatus. It localises to the endoplasmic reticulum. It catalyses the reaction N-hexadecanoylsphing-4-enine(in) = N-hexadecanoylsphing-4-enine(out). In terms of biological role, shelters ceramides and diacylglycerol lipids inside its START domain and mediates the intracellular trafficking of ceramides and diacylglycerol lipids in a non-vesicular manner. In Pongo abelii (Sumatran orangutan), this protein is Ceramide transfer protein (CERT1).